The chain runs to 414 residues: MAALKYAGLEDTDSEEELPPGWEERTTKDGWVYYANHLEEKTQWEHPKSGKRKRVAGGLPYGWEQETDENGQVYFVDHINKRTTYLDPRLAFTVEDNPAKPPTRQKYDGNSTAMEILQGRDLSGKVIIITGANSGIGFETAKSFALHGAYVILACRNMSRGNDAVQRILEEWHKAKVEAMTLDLASLRSVQNFAEAFKSKNMPLHILVCNAAIFGSSWCLTEDGLESTFQVNHLGHFYLVQLLEDILRRSSPARVVVVSSESHRFTEIKDSSGKLDFSLLSPSKKEYWAMLAYNRSKLCNILFSNELNRRLSPHGVTSNSVHPGNMIYSSIHRNWWVYTLLFTLARPFTKSMQQGAATTVYCATAAELEGLGGMYFNNCCRCLPSAEARNELTAVALWELSERLIREQLGRRSP.

A disordered region spans residues 1–23 (MAALKYAGLEDTDSEEELPPGWE). Positions 16-49 (EELPPGWEERTTKDGWVYYANHLEEKTQWEHPKS) constitute a WW 1 domain. Residues 50 to 55 (GKRKRV) carry the Nuclear localization signal motif. One can recognise a WW 2 domain in the interval 57 to 90 (GGLPYGWEQETDENGQVYFVDHINKRTTYLDPRL). 131–137 (GANSGIG) is a binding site for NADP(+). Serine 260 is a binding site for substrate. Tyrosine 293 functions as the Proton acceptor in the catalytic mechanism.

This sequence belongs to the short-chain dehydrogenases/reductases (SDR) family.

It localises to the cytoplasm. The protein resides in the mitochondrion. The protein localises to the golgi apparatus. It is found in the lysosome. Putative oxidoreductase. Acts as a tumor suppressor and plays a role in apoptosis. May function synergistically with p53/TP53 to control genotoxic stress-induced cell death. Plays a role in TGFB1 signaling and TGFB1-mediated cell death. May also play a role in tumor necrosis factor (TNF)-mediated cell death. Required for normal bone development. Inhibits Wnt signaling. This chain is WW domain-containing oxidoreductase (WWOX), found in Gallus gallus (Chicken).